Reading from the N-terminus, the 226-residue chain is ATP synthase F(0) complex subunit a (226 aa).

The next 6 helical transmembrane spans lie at 6-26 (FASFITPTMMGLPIVVTIIMF), 68-88 (WALMIVSLIMFIGSTNLLGLL), 97-117 (QLSMNLSMAIPLWAGAVILGF), 138-158 (IPMLIIIETISLFIQPMALAV), 164-184 (ITAGHLLMHLIGGATLVLMDI), and 189-209 (ATITFIILLLLTVLEFAVALI).

The protein belongs to the ATPase A chain family. In terms of assembly, component of the ATP synthase complex composed at least of ATP5F1A/subunit alpha, ATP5F1B/subunit beta, ATP5MC1/subunit c (homooctomer), MT-ATP6/subunit a, MT-ATP8/subunit 8, ATP5ME/subunit e, ATP5MF/subunit f, ATP5MG/subunit g, ATP5MK/subunit k, ATP5MJ/subunit j, ATP5F1C/subunit gamma, ATP5F1D/subunit delta, ATP5F1E/subunit epsilon, ATP5PF/subunit F6, ATP5PB/subunit b, ATP5PD/subunit d, ATP5PO/subunit OSCP. ATP synthase complex consists of a soluble F(1) head domain (subunits alpha(3) and beta(3)) - the catalytic core - and a membrane F(0) domain - the membrane proton channel (subunits c, a, 8, e, f, g, k and j). These two domains are linked by a central stalk (subunits gamma, delta, and epsilon) rotating inside the F1 region and a stationary peripheral stalk (subunits F6, b, d, and OSCP). Interacts with DNAJC30; interaction is direct.

Its subcellular location is the mitochondrion inner membrane. It carries out the reaction H(+)(in) = H(+)(out). Subunit a, of the mitochondrial membrane ATP synthase complex (F(1)F(0) ATP synthase or Complex V) that produces ATP from ADP in the presence of a proton gradient across the membrane which is generated by electron transport complexes of the respiratory chain. ATP synthase complex consist of a soluble F(1) head domain - the catalytic core - and a membrane F(1) domain - the membrane proton channel. These two domains are linked by a central stalk rotating inside the F(1) region and a stationary peripheral stalk. During catalysis, ATP synthesis in the catalytic domain of F(1) is coupled via a rotary mechanism of the central stalk subunits to proton translocation. With the subunit c (ATP5MC1), forms the proton-conducting channel in the F(0) domain, that contains two crucial half-channels (inlet and outlet) that facilitate proton movement from the mitochondrial intermembrane space (IMS) into the matrix. Protons are taken up via the inlet half-channel and released through the outlet half-channel, following a Grotthuss mechanism. This chain is ATP synthase F(0) complex subunit a, found in Rattus norvegicus (Rat).